We begin with the raw amino-acid sequence, 211 residues long: tRNA (pseudouridine(54)-N(1))-methyltransferase (211 aa).

3 residues coordinate S-adenosyl-L-methionine: leucine 128, glycine 150, and cysteine 183.

The protein belongs to the methyltransferase superfamily. TrmY family. In terms of assembly, homodimer.

The protein resides in the cytoplasm. It carries out the reaction pseudouridine(54) in tRNA + S-adenosyl-L-methionine = N(1)-methylpseudouridine(54) in tRNA + S-adenosyl-L-homocysteine + H(+). In terms of biological role, specifically catalyzes the N1-methylation of pseudouridine at position 54 (Psi54) in tRNAs. In Methanosarcina acetivorans (strain ATCC 35395 / DSM 2834 / JCM 12185 / C2A), this protein is tRNA (pseudouridine(54)-N(1))-methyltransferase.